The chain runs to 130 residues: Large ribosomal subunit protein bL19 (130 aa).

This sequence belongs to the bacterial ribosomal protein bL19 family.

In terms of biological role, this protein is located at the 30S-50S ribosomal subunit interface and may play a role in the structure and function of the aminoacyl-tRNA binding site. This Burkholderia ambifaria (strain ATCC BAA-244 / DSM 16087 / CCUG 44356 / LMG 19182 / AMMD) (Burkholderia cepacia (strain AMMD)) protein is Large ribosomal subunit protein bL19.